The following is a 158-amino-acid chain: Ribonuclease H (158 aa).

The 142-residue stretch at 5-146 folds into the RNase H type-1 domain; that stretch reads MRKQIEIFTD…CDQLAKQGAE (142 aa). Residues Asp-14, Glu-52, Asp-74, and Asp-138 each coordinate Mg(2+).

Belongs to the RNase H family. As to quaternary structure, monomer. It depends on Mg(2+) as a cofactor.

It localises to the cytoplasm. The enzyme catalyses Endonucleolytic cleavage to 5'-phosphomonoester.. Its function is as follows. Endonuclease that specifically degrades the RNA of RNA-DNA hybrids. The protein is Ribonuclease H of Mannheimia succiniciproducens (strain KCTC 0769BP / MBEL55E).